Here is a 160-residue protein sequence, read N- to C-terminus: Transcription elongation factor GreA (160 aa).

A coiled-coil region spans residues 12 to 76 (EGVKKLEEEL…QLENMLKNAS (65 aa)).

This sequence belongs to the GreA/GreB family.

In terms of biological role, necessary for efficient RNA polymerase transcription elongation past template-encoded arresting sites. The arresting sites in DNA have the property of trapping a certain fraction of elongating RNA polymerases that pass through, resulting in locked ternary complexes. Cleavage of the nascent transcript by cleavage factors such as GreA or GreB allows the resumption of elongation from the new 3'terminus. GreA releases sequences of 2 to 3 nucleotides. The sequence is that of Transcription elongation factor GreA from Clostridium botulinum (strain Kyoto / Type A2).